The sequence spans 421 residues: Glucose-1-phosphate adenylyltransferase (421 aa).

Alpha-D-glucose 1-phosphate contacts are provided by residues tyrosine 109, glycine 175, glutamate 190 to lysine 191, and serine 208.

It belongs to the bacterial/plant glucose-1-phosphate adenylyltransferase family. Homotetramer.

It carries out the reaction alpha-D-glucose 1-phosphate + ATP + H(+) = ADP-alpha-D-glucose + diphosphate. It participates in glycan biosynthesis; glycogen biosynthesis. In terms of biological role, involved in the biosynthesis of ADP-glucose, a building block required for the elongation reactions to produce glycogen. Catalyzes the reaction between ATP and alpha-D-glucose 1-phosphate (G1P) to produce pyrophosphate and ADP-Glc. This chain is Glucose-1-phosphate adenylyltransferase, found in Teredinibacter turnerae (strain ATCC 39867 / T7901).